The chain runs to 43 residues: Protein PsbN (43 aa).

Residues 5 to 27 form a helical membrane-spanning segment; it reads TLIAISISGLIVSFTGYALYTAF.

Belongs to the PsbN family.

Its subcellular location is the plastid. It is found in the chloroplast thylakoid membrane. In terms of biological role, may play a role in photosystem I and II biogenesis. The polypeptide is Protein PsbN (Cicer arietinum (Chickpea)).